The chain runs to 468 residues: Glutamate--tRNA ligase 2 (468 aa).

The 'HIGH' region motif lies at P9–G19. The short motif at K238 to R242 is the 'KMSKS' region element. K241 serves as a coordination point for ATP.

The protein belongs to the class-I aminoacyl-tRNA synthetase family. Glutamate--tRNA ligase type 1 subfamily. As to quaternary structure, monomer.

Its subcellular location is the cytoplasm. The catalysed reaction is tRNA(Glu) + L-glutamate + ATP = L-glutamyl-tRNA(Glu) + AMP + diphosphate. Functionally, catalyzes the attachment of glutamate to tRNA(Glu) in a two-step reaction: glutamate is first activated by ATP to form Glu-AMP and then transferred to the acceptor end of tRNA(Glu). The sequence is that of Glutamate--tRNA ligase 2 from Anaplasma phagocytophilum (strain HZ).